The chain runs to 96 residues: Integration host factor subunit beta (96 aa).

It belongs to the bacterial histone-like protein family. As to quaternary structure, heterodimer of an alpha and a beta chain.

This protein is one of the two subunits of integration host factor, a specific DNA-binding protein that functions in genetic recombination as well as in transcriptional and translational control. In Caulobacter vibrioides (strain ATCC 19089 / CIP 103742 / CB 15) (Caulobacter crescentus), this protein is Integration host factor subunit beta.